Consider the following 180-residue polypeptide: ATP-dependent protease subunit HslV (180 aa).

T9 is a catalytic residue. Na(+) contacts are provided by A164, C167, and T170.

Belongs to the peptidase T1B family. HslV subfamily. As to quaternary structure, a double ring-shaped homohexamer of HslV is capped on each side by a ring-shaped HslU homohexamer. The assembly of the HslU/HslV complex is dependent on binding of ATP.

Its subcellular location is the cytoplasm. It carries out the reaction ATP-dependent cleavage of peptide bonds with broad specificity.. With respect to regulation, allosterically activated by HslU binding. Its function is as follows. Protease subunit of a proteasome-like degradation complex believed to be a general protein degrading machinery. The polypeptide is ATP-dependent protease subunit HslV (Leptospira borgpetersenii serovar Hardjo-bovis (strain JB197)).